A 445-amino-acid polypeptide reads, in one-letter code: Exodeoxyribonuclease 7 large subunit (445 aa).

This sequence belongs to the XseA family. Heterooligomer composed of large and small subunits.

It localises to the cytoplasm. The catalysed reaction is Exonucleolytic cleavage in either 5'- to 3'- or 3'- to 5'-direction to yield nucleoside 5'-phosphates.. Functionally, bidirectionally degrades single-stranded DNA into large acid-insoluble oligonucleotides, which are then degraded further into small acid-soluble oligonucleotides. This chain is Exodeoxyribonuclease 7 large subunit, found in Xanthomonas oryzae pv. oryzae (strain PXO99A).